The following is a 570-amino-acid chain: Adenine deaminase (570 aa).

Belongs to the metallo-dependent hydrolases superfamily. Adenine deaminase family. The cofactor is Mn(2+).

The enzyme catalyses adenine + H2O + H(+) = hypoxanthine + NH4(+). This is Adenine deaminase from Petrotoga mobilis (strain DSM 10674 / SJ95).